We begin with the raw amino-acid sequence, 179 residues long: tRNA (cytidine(56)-2'-O)-methyltransferase (179 aa).

L84 is a binding site for S-adenosyl-L-methionine.

The protein belongs to the aTrm56 family. Homodimer.

It localises to the cytoplasm. It catalyses the reaction cytidine(56) in tRNA + S-adenosyl-L-methionine = 2'-O-methylcytidine(56) in tRNA + S-adenosyl-L-homocysteine + H(+). In terms of biological role, specifically catalyzes the AdoMet-dependent 2'-O-ribose methylation of cytidine at position 56 in tRNAs. This Methanothermobacter thermautotrophicus (strain ATCC 29096 / DSM 1053 / JCM 10044 / NBRC 100330 / Delta H) (Methanobacterium thermoautotrophicum) protein is tRNA (cytidine(56)-2'-O)-methyltransferase.